The primary structure comprises 465 residues: Cysteine--tRNA ligase (465 aa).

Cys30 contacts Zn(2+). Residues 32–42 (MTVYDYCHVGH) carry the 'HIGH' region motif. Zn(2+) contacts are provided by Cys214, His239, and Glu243. Residues 271-275 (KMSKS) carry the 'KMSKS' region motif. An ATP-binding site is contributed by Lys274.

It belongs to the class-I aminoacyl-tRNA synthetase family. In terms of assembly, monomer. Zn(2+) is required as a cofactor.

The protein localises to the cytoplasm. It catalyses the reaction tRNA(Cys) + L-cysteine + ATP = L-cysteinyl-tRNA(Cys) + AMP + diphosphate. In Ralstonia nicotianae (strain ATCC BAA-1114 / GMI1000) (Ralstonia solanacearum), this protein is Cysteine--tRNA ligase.